The following is a 419-amino-acid chain: UDP-N-acetylglucosamine 1-carboxyvinyltransferase (419 aa).

Position 22–23 (22–23 (KN)) interacts with phosphoenolpyruvate. Arginine 93 serves as a coordination point for UDP-N-acetyl-alpha-D-glucosamine. Cysteine 117 (proton donor) is an active-site residue. Cysteine 117 is subject to 2-(S-cysteinyl)pyruvic acid O-phosphothioketal. UDP-N-acetyl-alpha-D-glucosamine is bound by residues aspartate 307 and isoleucine 329.

It belongs to the EPSP synthase family. MurA subfamily.

Its subcellular location is the cytoplasm. The enzyme catalyses phosphoenolpyruvate + UDP-N-acetyl-alpha-D-glucosamine = UDP-N-acetyl-3-O-(1-carboxyvinyl)-alpha-D-glucosamine + phosphate. Its pathway is cell wall biogenesis; peptidoglycan biosynthesis. In terms of biological role, cell wall formation. Adds enolpyruvyl to UDP-N-acetylglucosamine. The sequence is that of UDP-N-acetylglucosamine 1-carboxyvinyltransferase from Shewanella sediminis (strain HAW-EB3).